The chain runs to 523 residues: Leghemoglobin reductase (523 aa).

The transit peptide at 1–30 (MAMASLARRKAYAVVSSSRSSVFLTSLRGF) directs the protein to the mitochondrion. FAD contacts are provided by residues 66-75 (EKRGTLGGTC), lysine 84, glycine 148, and 177-179 (TGS). Cysteines 75 and 80 form a disulfide. Residues 214 to 221 (GAGYIGLE), glutamate 237, valine 271, and glycine 306 contribute to the NAD(+) site. FAD contacts are provided by residues aspartate 347 and 353-356 (MLAH). Histidine 479 functions as the Proton acceptor in the catalytic mechanism.

This sequence belongs to the class-I pyridine nucleotide-disulfide oxidoreductase family. In terms of assembly, homodimer. FAD is required as a cofactor.

It is found in the mitochondrion. It catalyses the reaction 2 Fe(III)-[leghemoglobin] + NADH = 2 Fe(II)-[leghemoglobin] + NAD(+) + H(+). The catalysed reaction is 2 Fe(III)-[leghemoglobin] + NADPH = 2 Fe(II)-[leghemoglobin] + NADP(+) + H(+). Functionally, reduces ferric leghemoglobin (Lb) to ferrous Lb. This is Leghemoglobin reductase (FLBR) from Vigna unguiculata (Cowpea).